A 256-amino-acid chain; its full sequence is Floral homeotic protein APETALA 1 (256 aa).

One can recognise an MADS-box domain in the interval 1-61 (MGRGRVQLKR…GKLFEYSTDP (61 aa)). A K-box domain is found at 88–178 (NTNWSMEYNR…SKQIKERENV (91 aa)). The disordered stretch occupies residues 187-206 (DEQNHGHNMPPPPPPQQHQI).

As to quaternary structure, homodimer capable of binding to CArG-box sequences.

Its subcellular location is the nucleus. Its function is as follows. Transcription factor that promotes early floral meristem identity in synergy with LEAFY. Displays a redundant function with CAULIFLOWER in the up-regulation of LEAFY. Required subsequently for the transition of an inflorescence meristem into a floral meristem, and for the normal development of sepals and petals in flowers. Regulates positively B class homeotic proteins. The protein is Floral homeotic protein APETALA 1 (AP1) of Brassica oleracea (Wild cabbage).